Consider the following 146-residue polypeptide: Ribonuclease P protein component (146 aa).

It belongs to the RnpA family. As to quaternary structure, consists of a catalytic RNA component (M1 or rnpB) and a protein subunit.

It carries out the reaction Endonucleolytic cleavage of RNA, removing 5'-extranucleotides from tRNA precursor.. RNaseP catalyzes the removal of the 5'-leader sequence from pre-tRNA to produce the mature 5'-terminus. It can also cleave other RNA substrates such as 4.5S RNA. The protein component plays an auxiliary but essential role in vivo by binding to the 5'-leader sequence and broadening the substrate specificity of the ribozyme. The protein is Ribonuclease P protein component of Helicobacter hepaticus (strain ATCC 51449 / 3B1).